Reading from the N-terminus, the 413-residue chain is L-methionine gamma-lyase (413 aa).

Pyridoxal 5'-phosphate contacts are provided by residues 75-77 and 105-106; these read YGR and GM. Substrate is bound at residue Tyr131. 218–220 provides a ligand contact to pyridoxal 5'-phosphate; sequence SAT. At Lys221 the chain carries N6-(pyridoxal phosphate)lysine. Substrate is bound at residue Arg365. A disordered region spans residues 388–413; it reads RLPETAGAGREPSRTALRLPERAADR.

This sequence belongs to the trans-sulfuration enzymes family. Homotetramer; dimer of active dimers. Requires pyridoxal 5'-phosphate as cofactor.

The catalysed reaction is L-methionine + H2O = methanethiol + 2-oxobutanoate + NH4(+). The enzyme catalyses L-homocysteine + H2O = 2-oxobutanoate + hydrogen sulfide + NH4(+) + H(+). It catalyses the reaction L-cysteine + H2O = hydrogen sulfide + pyruvate + NH4(+) + H(+). Functionally, catalyzes the alpha,gamma-elimination of L-methionine to produce methanethiol, 2-oxobutanoate and ammonia. Is probably involved in L-methionine catabolism. Is also able to catalyze the alpha,gamma-elimination of L-homocysteine, and, to a lesser extent, the alpha,beta-elimination of L-cysteine. This is L-methionine gamma-lyase from Streptomyces avermitilis (strain ATCC 31267 / DSM 46492 / JCM 5070 / NBRC 14893 / NCIMB 12804 / NRRL 8165 / MA-4680).